A 652-amino-acid chain; its full sequence is DNA ligase (652 aa).

NAD(+) contacts are provided by residues 30–34 (DEVYD), 79–80 (SL), and Glu-108. Lys-110 functions as the N6-AMP-lysine intermediate in the catalytic mechanism. 4 residues coordinate NAD(+): Arg-131, Glu-165, Lys-280, and Lys-304. 4 residues coordinate Zn(2+): Cys-398, Cys-401, Cys-414, and Cys-419. A BRCT domain is found at 574-652 (AKENPFKGKS…DEMRSKIEQA (79 aa)).

It belongs to the NAD-dependent DNA ligase family. LigA subfamily. Requires Mg(2+) as cofactor. The cofactor is Mn(2+).

The catalysed reaction is NAD(+) + (deoxyribonucleotide)n-3'-hydroxyl + 5'-phospho-(deoxyribonucleotide)m = (deoxyribonucleotide)n+m + AMP + beta-nicotinamide D-nucleotide.. DNA ligase that catalyzes the formation of phosphodiester linkages between 5'-phosphoryl and 3'-hydroxyl groups in double-stranded DNA using NAD as a coenzyme and as the energy source for the reaction. It is essential for DNA replication and repair of damaged DNA. The protein is DNA ligase of Sulfurimonas denitrificans (strain ATCC 33889 / DSM 1251) (Thiomicrospira denitrificans (strain ATCC 33889 / DSM 1251)).